Consider the following 751-residue polypeptide: Serine/threonine-protein kinase-like protein CCR4 (751 aa).

The signal sequence occupies residues 1 to 31 (MALTISISCFSSYFVSLLLLVLSSFSFVCFS). Residues 32–366 (LSTVSISHIS…NKTWSRRNIA (335 aa)) are Extracellular-facing. N-linked (GlcNAc...) asparagine glycans are attached at residues Asn-42, Asn-51, Asn-98, Asn-243, Asn-254, Asn-283, and Asn-357. Residues 367 to 387 (FLVVGCVGTFSLLLVISFLIF) form a helical membrane-spanning segment. Over 388-751 (KSHCRCRVHD…TETVSRSNTY (364 aa)) the chain is Cytoplasmic. The 291-residue stretch at 443 to 733 (FSVRFHLGIG…EVVSKLESAL (291 aa)) folds into the Protein kinase domain. ATP contacts are provided by residues 449–457 (LGIGSFGSV) and Lys-471. Asp-579 (proton acceptor) is an active-site residue.

Belongs to the protein kinase superfamily. Ser/Thr protein kinase family. Homodimer. Expressed in roots, leaves, especially in trichomes, shoot apical meristems (SAM), and, to a lower extent, in floral buds.

The protein localises to the membrane. It carries out the reaction L-seryl-[protein] + ATP = O-phospho-L-seryl-[protein] + ADP + H(+). It catalyses the reaction L-threonyl-[protein] + ATP = O-phospho-L-threonyl-[protein] + ADP + H(+). This Arabidopsis thaliana (Mouse-ear cress) protein is Serine/threonine-protein kinase-like protein CCR4 (CCR4).